We begin with the raw amino-acid sequence, 469 residues long: Citrate synthase, mitochondrial (469 aa).

The transit peptide at 1–28 (MAFFRTVTKLRSRLGQPPSLRDSVRCLQ) directs the protein to the mitochondrion. Residues histidine 304, histidine 350, and aspartate 405 contribute to the active site.

The protein belongs to the citrate synthase family. Homodimer.

The protein localises to the mitochondrion matrix. It carries out the reaction oxaloacetate + acetyl-CoA + H2O = citrate + CoA + H(+). Its pathway is carbohydrate metabolism; tricarboxylic acid cycle; isocitrate from oxaloacetate: step 1/2. The sequence is that of Citrate synthase, mitochondrial (MCSI) from Fragaria ananassa (Strawberry).